The following is a 375-amino-acid chain: Chaperone protein DnaJ (375 aa).

Residues 5–70 (DFYEVLGVEK…QKRAQYDQFG (66 aa)) enclose the J domain. A CR-type zinc finger spans residues 134-216 (GVEKEVSITK…CKGKGTVRKQ (83 aa)). 8 residues coordinate Zn(2+): Cys-147, Cys-150, Cys-164, Cys-167, Cys-190, Cys-193, Cys-204, and Cys-207. CXXCXGXG motif repeat units follow at residues 147-154 (CETCTGTG), 164-171 (CPKCNGSG), 190-197 (CDMCGGKG), and 204-211 (CSDCKGKG).

This sequence belongs to the DnaJ family. As to quaternary structure, homodimer. The cofactor is Zn(2+).

The protein localises to the cytoplasm. In terms of biological role, participates actively in the response to hyperosmotic and heat shock by preventing the aggregation of stress-denatured proteins and by disaggregating proteins, also in an autonomous, DnaK-independent fashion. Unfolded proteins bind initially to DnaJ; upon interaction with the DnaJ-bound protein, DnaK hydrolyzes its bound ATP, resulting in the formation of a stable complex. GrpE releases ADP from DnaK; ATP binding to DnaK triggers the release of the substrate protein, thus completing the reaction cycle. Several rounds of ATP-dependent interactions between DnaJ, DnaK and GrpE are required for fully efficient folding. Also involved, together with DnaK and GrpE, in the DNA replication of plasmids through activation of initiation proteins. In Clostridium tetani (strain Massachusetts / E88), this protein is Chaperone protein DnaJ.